A 136-amino-acid polypeptide reads, in one-letter code: uncharacterized protein (136 aa).

Residues 14–34 (ASVFAFFVLFLFCLKIILVLF) form a helical membrane-spanning segment.

Its subcellular location is the membrane. This is an uncharacterized protein from Mycoplasma genitalium (strain ATCC 33530 / DSM 19775 / NCTC 10195 / G37) (Mycoplasmoides genitalium).